A 469-amino-acid polypeptide reads, in one-letter code: NADH-quinone oxidoreductase subunit N (469 aa).

A run of 14 helical transmembrane segments spans residues 6–26 (IWIIMPLAILAGASLLILLLG), 37–57 (VGVAACVGAALWALQLQPAAL), 61–81 (LGVAFTPFARFFTVLFSLTAA), 96–116 (ISGEEYPATVIFAAFGMAVVS), 121–141 (LLILFLGLEALTFAFYILVAI), 156–176 (LLLGAISAACIAFGIALLYAA), 197–217 (PIALAGWGLLLIGIAFKISLV), 234–254 (VVAFLSTASKGAAIAFLLLLL), 263–283 (LHTPLWWLSLLSMLVGNLAAL), 291–311 (MLAYSSIAQMGYLVLALLTGS), 315–335 (FAAVILYVVVYTAMNLAAFGA), 362–382 (AGILALALFALAGIPPTAGFI), 397–419 (IPLAIVGILAAAVSAYYYLRVVV), and 441–461 (IALSAAALVILAVGIYPSPLL).

It belongs to the complex I subunit 2 family. As to quaternary structure, NDH-1 is composed of 14 different subunits. Subunits NuoA, H, J, K, L, M, N constitute the membrane sector of the complex.

It localises to the cell inner membrane. It carries out the reaction a quinone + NADH + 5 H(+)(in) = a quinol + NAD(+) + 4 H(+)(out). In terms of biological role, NDH-1 shuttles electrons from NADH, via FMN and iron-sulfur (Fe-S) centers, to quinones in the respiratory chain. The immediate electron acceptor for the enzyme in this species is believed to be ubiquinone. Couples the redox reaction to proton translocation (for every two electrons transferred, four hydrogen ions are translocated across the cytoplasmic membrane), and thus conserves the redox energy in a proton gradient. The protein is NADH-quinone oxidoreductase subunit N of Geotalea uraniireducens (strain Rf4) (Geobacter uraniireducens).